Consider the following 521-residue polypeptide: Probable glycine dehydrogenase (decarboxylating) subunit 2 (521 aa).

Residue Lys-279 is modified to N6-(pyridoxal phosphate)lysine.

This sequence belongs to the GcvP family. C-terminal subunit subfamily. In terms of assembly, the glycine cleavage system is composed of four proteins: P, T, L and H. In this organism, the P 'protein' is a heterodimer of two subunits. Requires pyridoxal 5'-phosphate as cofactor.

The catalysed reaction is N(6)-[(R)-lipoyl]-L-lysyl-[glycine-cleavage complex H protein] + glycine + H(+) = N(6)-[(R)-S(8)-aminomethyldihydrolipoyl]-L-lysyl-[glycine-cleavage complex H protein] + CO2. In terms of biological role, the glycine cleavage system catalyzes the degradation of glycine. The P protein binds the alpha-amino group of glycine through its pyridoxal phosphate cofactor; CO(2) is released and the remaining methylamine moiety is then transferred to the lipoamide cofactor of the H protein. The polypeptide is Probable glycine dehydrogenase (decarboxylating) subunit 2 (Staphylothermus marinus (strain ATCC 43588 / DSM 3639 / JCM 9404 / F1)).